Here is a 66-residue protein sequence, read N- to C-terminus: U1-theraphotoxin-Cg1b (66 aa).

The first 21 residues, 1–21 (MKTSALFVIFGLVLLFCNSFA), serve as a signal peptide directing secretion. The propeptide occupies 22-29 (AELKTTGR). 3 disulfides stabilise this stretch: Cys31–Cys46, Cys38–Cys51, and Cys45–Cys58.

Belongs to the neurotoxin 10 (Hwtx-1) family. 46 (Jztx-7/10/12) subfamily. As to expression, expressed by the venom gland.

The protein localises to the secreted. Its function is as follows. Probable ion channel inhibitor. The polypeptide is U1-theraphotoxin-Cg1b (Chilobrachys guangxiensis (Chinese earth tiger tarantula)).